We begin with the raw amino-acid sequence, 152 residues long: Superoxide dismutase [Cu-Zn] 2 (152 aa).

2 N-linked (GlcNAc...) asparagine glycosylation sites follow: N9 and N33. H45, H47, and H62 together coordinate Cu cation. The cysteines at positions 56 and 145 are disulfide-linked. Zn(2+) is bound by residues H62, H70, H79, and D82. Residue N85 is glycosylated (N-linked (GlcNAc...) asparagine). Residue H119 participates in Cu cation binding.

It belongs to the Cu-Zn superoxide dismutase family. Requires Cu cation as cofactor. Zn(2+) is required as a cofactor. Expressed in fruits, leaves and pollen grains.

Its subcellular location is the cytoplasm. The protein resides in the endoplasmic reticulum. It catalyses the reaction 2 superoxide + 2 H(+) = H2O2 + O2. With respect to regulation, inhibited by KCN and H(2)O(2). In terms of biological role, destroys radicals which are normally produced within the cells and which are toxic to biological systems. Probably involved in the protection against oxidative stress during pollen development. In Olea europaea (Common olive), this protein is Superoxide dismutase [Cu-Zn] 2 (OLE5).